A 297-amino-acid chain; its full sequence is tRNA dimethylallyltransferase (297 aa).

A10–T17 is an ATP binding site. T12–T17 is a binding site for substrate. The interaction with substrate tRNA stretch occupies residues D34–Q37.

Belongs to the IPP transferase family. Monomer. The cofactor is Mg(2+).

It catalyses the reaction adenosine(37) in tRNA + dimethylallyl diphosphate = N(6)-dimethylallyladenosine(37) in tRNA + diphosphate. Its function is as follows. Catalyzes the transfer of a dimethylallyl group onto the adenine at position 37 in tRNAs that read codons beginning with uridine, leading to the formation of N6-(dimethylallyl)adenosine (i(6)A). This Leptospira interrogans serogroup Icterohaemorrhagiae serovar Lai (strain 56601) protein is tRNA dimethylallyltransferase.